A 340-amino-acid polypeptide reads, in one-letter code: GATA transcription factor 20 (340 aa).

A disordered region spans residues Met-1 to His-88. The span at Ala-25–Glu-47 shows a compositional bias: low complexity. Over residues Ala-48–Gly-60 the composition is skewed to basic and acidic residues. Over residues Ala-61–Asp-84 the composition is skewed to acidic residues. The Tify domain occupies Gln-121–Gly-156. The CCT domain occupies Arg-182–Ser-224. Residues Gln-215–Ser-253 form a disordered region. Over residues Ser-233–Trp-244 the composition is skewed to polar residues. A GATA-type zinc finger spans residues Cys-257–Cys-284. Residues Asp-313–Gln-325 are compositionally biased toward polar residues. Residues Asp-313–Thr-340 are disordered.

This sequence belongs to the type IV zinc-finger family. Class C subfamily.

It is found in the nucleus. Its function is as follows. Transcriptional activator that specifically binds 5'-GATA-3' or 5'-GAT-3' motifs within gene promoters. The protein is GATA transcription factor 20 of Oryza sativa subsp. japonica (Rice).